The sequence spans 327 residues: Phenylalanine--tRNA ligase alpha subunit (327 aa).

Residue Glu252 coordinates Mg(2+).

The protein belongs to the class-II aminoacyl-tRNA synthetase family. Phe-tRNA synthetase alpha subunit type 1 subfamily. In terms of assembly, tetramer of two alpha and two beta subunits. The cofactor is Mg(2+).

It is found in the cytoplasm. It catalyses the reaction tRNA(Phe) + L-phenylalanine + ATP = L-phenylalanyl-tRNA(Phe) + AMP + diphosphate + H(+). The protein is Phenylalanine--tRNA ligase alpha subunit of Shewanella amazonensis (strain ATCC BAA-1098 / SB2B).